Here is a 194-residue protein sequence, read N- to C-terminus: Dof zinc finger protein DOF1.7 (194 aa).

Residues Leu33–Lys87 form a Dof-type zinc finger. Cys35, Cys38, Cys60, and Cys63 together coordinate Zn(2+). Residues Arg74–Met125 form a disordered region. The segment covering Arg88–Asn99 has biased composition (low complexity). The segment covering Glu104–Ser121 has biased composition (basic and acidic residues).

The protein resides in the nucleus. Transcription factor that binds specifically to a 5'-AA[AG]G-3' consensus core sequence. The chain is Dof zinc finger protein DOF1.7 (DOF1.7) from Arabidopsis thaliana (Mouse-ear cress).